The sequence spans 357 residues: Chorismate synthase (357 aa).

Arg-46 is a binding site for NADP(+). Residues 123 to 125 (RSS), 235 to 236 (NA), Gly-275, 290 to 294 (KPTPS), and Arg-316 each bind FMN.

This sequence belongs to the chorismate synthase family. In terms of assembly, homotetramer. Requires FMNH2 as cofactor.

It carries out the reaction 5-O-(1-carboxyvinyl)-3-phosphoshikimate = chorismate + phosphate. Its pathway is metabolic intermediate biosynthesis; chorismate biosynthesis; chorismate from D-erythrose 4-phosphate and phosphoenolpyruvate: step 7/7. Its function is as follows. Catalyzes the anti-1,4-elimination of the C-3 phosphate and the C-6 proR hydrogen from 5-enolpyruvylshikimate-3-phosphate (EPSP) to yield chorismate, which is the branch point compound that serves as the starting substrate for the three terminal pathways of aromatic amino acid biosynthesis. This reaction introduces a second double bond into the aromatic ring system. The protein is Chorismate synthase of Nitratiruptor sp. (strain SB155-2).